A 74-amino-acid polypeptide reads, in one-letter code: MSRRLILILVLVAMLVKTMAGMESKWVETTYEIKKRSGTSEKERESERLLGVVNPLIKCFRSPCPGRRAISEQT.

The first 21 residues, 1–21, serve as a signal peptide directing secretion; that stretch reads MSRRLILILVLVAMLVKTMAG. Residues 22-33 constitute a propeptide that is removed on maturation; sequence MESKWVETTYEI. Pro-65 is subject to Proline amide. Residues 69–74 constitute a propeptide that is removed on maturation; that stretch reads AISEQT.

This sequence belongs to the non-disulfide-bridged peptide (NDBP) superfamily. Medium-length antimicrobial peptide (group 3) family. Expressed by the venom gland.

Its subcellular location is the secreted. The protein resides in the target cell membrane. Its function is as follows. Possesses antimicrobial activity against both Gram-negative and Gram-positive bacteria, as well as against the fungus C.tropicalis. Also possesses a relatively high hemolytic activity. May act by disrupting the integrity of the bacterial cell membrane. This Heterometrus spinifer (Asia giant forest scorpion) protein is Antimicrobial peptide HsAp2.